We begin with the raw amino-acid sequence, 248 residues long: 3-deoxy-manno-octulosonate cytidylyltransferase (248 aa).

It belongs to the KdsB family.

It localises to the cytoplasm. It catalyses the reaction 3-deoxy-alpha-D-manno-oct-2-ulosonate + CTP = CMP-3-deoxy-beta-D-manno-octulosonate + diphosphate. The protein operates within nucleotide-sugar biosynthesis; CMP-3-deoxy-D-manno-octulosonate biosynthesis; CMP-3-deoxy-D-manno-octulosonate from 3-deoxy-D-manno-octulosonate and CTP: step 1/1. It functions in the pathway bacterial outer membrane biogenesis; lipopolysaccharide biosynthesis. Its function is as follows. Activates KDO (a required 8-carbon sugar) for incorporation into bacterial lipopolysaccharide in Gram-negative bacteria. This is 3-deoxy-manno-octulosonate cytidylyltransferase from Shigella flexneri.